Consider the following 74-residue polypeptide: Consomatin Ma1 (74 aa).

The signal sequence occupies residues 1–22 (MQTAYWVMVMMMVWITAPLSEG). A propeptide spanning residues 23–57 (GKLNGEIRGLVSHILIPQHTLRSLTSRDRSDNGGS) is cleaved from the precursor. A disulfide bridge connects residues cysteine 63 and cysteine 68. The residue at position 65 (tryptophan 65) is a D-tryptophan. 4-hydroxyproline occurs at positions 69, 70, and 72.

Belongs to the conotoxin C superfamily. Consomatin family. In terms of tissue distribution, expressed by the venom duct.

It localises to the secreted. Its function is as follows. Moderately activates human somatostatin receptors (SSTR) with a preferential activation of SSTR1 and SSTR4. In vivo, does not cause behavioral changes in mice within a few minutes of intracranial injection, but causes a progressive loss of movement thereafter. Four to five hours after injection, mice recover, even with the highest dose tested. Shows antinociception and antihyperalgesia activities in two mouse models of acute pain, most probably by acting outside the central nervous system. The chain is Consomatin Ma1 from Conus magus (Magical cone).